A 113-amino-acid polypeptide reads, in one-letter code: Mini zinc finger protein 3 (113 aa).

The ZF-HD dimerization-type; degenerate zinc finger occupies 24 to 83 (YGECRRNHAASTGGHAVDGCREFIAAEDGGGGNSTGAVGVAAAALKCAACGCHRSFHRRV). Residues 93 to 113 (DCDSGDTSSSSPSSSSSLSSE) form a disordered region. Low complexity predominate over residues 97–113 (GDTSSSSPSSSSSLSSE).

As to quaternary structure, homo- and heterodimers.

The protein resides in the cytoplasm. Inhibits zinc finger homeodomain (ZHD) transcription factors, by interacting with them to prevent both their nuclear localization and their DNA-binding properties. This Oryza sativa subsp. indica (Rice) protein is Mini zinc finger protein 3 (MIF3).